Here is a 349-residue protein sequence, read N- to C-terminus: Probable G-protein coupled receptor 21 (349 aa).

At 1–32 (MNSTLDGNQSSHPFCLLAFGYLETVNFCLLEV) the chain is on the extracellular side. N-linked (GlcNAc...) asparagine glycans are attached at residues Asn-2 and Asn-8. Residues 33–53 (LIIVFLTVLIISGNIIVIFVF) traverse the membrane as a helical segment. Residues 54–75 (HCAPLLNHHTTSYFIQTMAYAD) are Cytoplasmic-facing. The helical transmembrane segment at 76–96 (LFVGVSCVVPSLSLLHHPLPV) threads the bilayer. Over 97–104 (EESLTCQI) the chain is Extracellular. Residues 105-125 (FGFVVSVLKSVSMASLACISI) form a helical membrane-spanning segment. The Cytoplasmic segment spans residues 126–147 (DRYIAITKPLTYNTLVTPWRLR). A helical membrane pass occupies residues 148 to 168 (LCIFLIWLYSTLVFLPSFFHW). Residues 169–191 (GKPGYHGDVFQWCAESWHTDSYF) lie on the Extracellular side of the membrane. The helical transmembrane segment at 192–212 (TLFIVMMLYAPAALIVCFTYF) threads the bilayer. The Cytoplasmic segment spans residues 213-252 (NIFRICQQHTKDISERQARFSSQSGETGEVQACPDKRYAM). Residues 253–273 (VLFRITSVFYILWLPYIIYFL) form a helical membrane-spanning segment. Residues 274-283 (LESSTGHSNR) lie on the Extracellular side of the membrane. The chain crosses the membrane as a helical span at residues 284 to 304 (FASFLTTWLAISNSFCNCVIY). At 305 to 349 (SLSNSVFQRGLKRLSGAMCTSCASQTTANDPYTVRSKGPLNGCHI) the chain is on the cytoplasmic side.

It belongs to the G-protein coupled receptor 1 family. In terms of tissue distribution, not detected in the brain regions thalamus, putamen, caudate, frontal cortex, pons, hypothalamus, hippocampus.

It is found in the cell membrane. Functionally, orphan receptor. This Homo sapiens (Human) protein is Probable G-protein coupled receptor 21 (GPR21).